The primary structure comprises 239 residues: Peptidyl-tRNA hydrolase (239 aa).

Residue Tyr-14 coordinates tRNA. His-19 serves as the catalytic Proton acceptor. Residues Phe-64, Asn-66, and Asn-112 each coordinate tRNA. The tract at residues 188 to 225 (GGKPDAEEPQAPKKQVGQSHIHKARNAAQPKKLPATGP) is disordered.

This sequence belongs to the PTH family. In terms of assembly, monomer.

It is found in the cytoplasm. The enzyme catalyses an N-acyl-L-alpha-aminoacyl-tRNA + H2O = an N-acyl-L-amino acid + a tRNA + H(+). In terms of biological role, hydrolyzes ribosome-free peptidyl-tRNAs (with 1 or more amino acids incorporated), which drop off the ribosome during protein synthesis, or as a result of ribosome stalling. Functionally, catalyzes the release of premature peptidyl moieties from peptidyl-tRNA molecules trapped in stalled 50S ribosomal subunits, and thus maintains levels of free tRNAs and 50S ribosomes. The polypeptide is Peptidyl-tRNA hydrolase (Sinorhizobium fredii (strain NBRC 101917 / NGR234)).